Reading from the N-terminus, the 260-residue chain is MELDEVIITRAIFDEYSKTFLDYTEVDVALIGGGPANLVAARYLAEAGAKVAIYEQKLSLGGGMWAGGMMFPRIVVQEEACRILDDFGIRYKEYQPGYYVANSVESVGKLISGATSAGAEVFNLVSFEDVMIRENDRVTGIVVNWGPVTVQRLHVDPLMIRTKLVIDGTGHEAVVCNTILRKIPNAKIGNLGKLGEKPMWSEVGEQLVVDATKEIYPGLIVAGMAANAATCSPRMGPVFGGMLLSGEKAAKLALEKLKEL.

NAD(+) is bound by residues A36, 55-56, G63, and 154-156; these read EQ and HVD. Fe cation is bound by residues D156 and H171. NAD(+) is bound at residue M224. Glycine is bound at residue R234.

It belongs to the THI4 family. In terms of assembly, homooctamer; tetramer of dimers. It depends on Fe(2+) as a cofactor.

The enzyme catalyses hydrogen sulfide + glycine + NAD(+) = ADP-5-ethyl-4-methylthiazole-2-carboxylate + nicotinamide + 3 H2O + H(+). The protein operates within cofactor biosynthesis; thiamine diphosphate biosynthesis. In terms of biological role, involved in the biosynthesis of the thiazole moiety of thiamine. Catalyzes the conversion of NAD and glycine to adenosine diphosphate 5-(2-hydroxyethyl)-4-methylthiazole-2-carboxylate (ADT), an adenylated thiazole intermediate, using free sulfide as a source of sulfur. The sequence is that of Thiamine thiazole synthase from Methanosarcina barkeri (strain Fusaro / DSM 804).